The primary structure comprises 314 residues: Olfactory receptor 4K2 (314 aa).

The Extracellular portion of the chain corresponds to 1 to 25 (MDVGNKSTMSEFVLLGLSNSWELQM). Residue Asn-5 is glycosylated (N-linked (GlcNAc...) asparagine). The helical transmembrane segment at 26-49 (FFFMVFSLLYVATMVGNSLIVITV) threads the bilayer. At 50–57 (IVDPHLHS) the chain is on the cytoplasmic side. The chain crosses the membrane as a helical span at residues 58 to 79 (PMYFLLTNLSIIDMSLASFATP). Residues 80–100 (KMITDYLTGHKTISFDGCLTQ) lie on the Extracellular side of the membrane. Cys-97 and Cys-189 are disulfide-bonded. A helical transmembrane segment spans residues 101 to 120 (IFFLHLFTGTEIILLMAMSF). The Cytoplasmic portion of the chain corresponds to 121–139 (DRYIAICKPLHYASVISPQ). The helical transmembrane segment at 140 to 158 (VCVALVVASWIMGVMHSMS) threads the bilayer. Over 159 to 195 (QVIFALTLPFCGPYEVDSFFCDLPVVFQLACVDTYVL) the chain is Extracellular. Residues 196 to 219 (GLFMISTSGIIALSCFIVLFNSYV) traverse the membrane as a helical segment. Residues 220-235 (IVLVTVKHHSSRGSSK) lie on the Cytoplasmic side of the membrane. A helical membrane pass occupies residues 236–258 (ALSTCTAHFIVVFLFFGPCIFIY). Topologically, residues 259-269 (MWPLSSFLTDK) are extracellular. Residues 270–289 (ILSVFYTIFTPTLNPIIYTL) form a helical membrane-spanning segment. Over 290-314 (RNQEVKIAMRKLKNRFLNFNKAMPS) the chain is Cytoplasmic.

This sequence belongs to the G-protein coupled receptor 1 family.

The protein resides in the cell membrane. Its function is as follows. Odorant receptor. The sequence is that of Olfactory receptor 4K2 (OR4K2) from Homo sapiens (Human).